The following is a 520-amino-acid chain: MKIDETTYYSVLGLPTTANKKDIHKSYLRLARKLHPDKSKSNDFEELFKVVVQAHSILTDISSKQEYDAILKRKGLSNYTPLGYKEHTKKQNQSNNLNQQDASKNSKKNDGVPTQSKVTRKNKPYEQQPYGFGLDFNEGSKMKKDKQKGRNTSKNSKEQQGSQETTNTSENLQRNAKGNKNNKNPRKDRFHTLDNSLDTENDNKRRNIKKAKDRTSKDQNTYSHTNYQRKRNKVKFTQGSIRMRNPEATQSNPDLQNDWDPLKDIISQFGNSNIQDDFGIENIKPSSDPRTFELEDLSLDCEYDFVESNSRVRRANMQNVFINEMDRLMINDPLDMSSIKHSLYSIPYTKRQKTSQSTYTFNDQNYRFTERLPRQENSEGPFGEIPSVFESSTGTMENHRSDFNLRGRPETRENDNIIIPEMMHFPDAVTSKEEEVSLKTRFNHFNEDCNRTKEYILKVLKNRISVDKDLSDMMTVPEYHSLILATKSFDVHLSKQLLELNELQFNAGQRYTELFKSIQY.

The region spanning 7-71 is the J domain; sequence TYYSVLGLPT…SSKQEYDAIL (65 aa). Disordered stretches follow at residues 82 to 257 and 389 to 409; these read LGYK…DLQN and FESS…RGRP. Residues 91 to 100 show a composition bias toward low complexity; sequence QNQSNNLNQQ. The span at 152 to 182 shows a compositional bias: polar residues; the sequence is TSKNSKEQQGSQETTNTSENLQRNAKGNKNN. A compositionally biased stretch (basic and acidic residues) spans 397–409; it reads ENHRSDFNLRGRP.

Its subcellular location is the cytoplasm. The protein localises to the nucleus. The protein is J protein JJJ2 (JJJ2) of Vanderwaltozyma polyspora (strain ATCC 22028 / DSM 70294 / BCRC 21397 / CBS 2163 / NBRC 10782 / NRRL Y-8283 / UCD 57-17) (Kluyveromyces polysporus).